A 280-amino-acid chain; its full sequence is Urease accessory protein UreD (280 aa).

Belongs to the UreD family. In terms of assembly, ureD, UreF and UreG form a complex that acts as a GTP-hydrolysis-dependent molecular chaperone, activating the urease apoprotein by helping to assemble the nickel containing metallocenter of UreC. The UreE protein probably delivers the nickel.

The protein localises to the cytoplasm. Functionally, required for maturation of urease via the functional incorporation of the urease nickel metallocenter. This Pseudomonas aeruginosa (strain ATCC 15692 / DSM 22644 / CIP 104116 / JCM 14847 / LMG 12228 / 1C / PRS 101 / PAO1) protein is Urease accessory protein UreD.